The chain runs to 297 residues: Salivary glue protein Sgs-4 (297 aa).

An N-terminal signal peptide occupies residues 1 to 21 (MRLELLVVLLVGLAALAPSGS). A run of 21 repeats spans residues 26-32 (TEPPRCE), 33-39 (TEPPRCE), 40-46 (TEPPRCE), 47-53 (TEPPRCE), 54-60 (TEPPRCE), 61-67 (TTTPKCE), 68-74 (TTPPTCR), 75-81 (TEPPTCK), 82-88 (TEPPTCR), 89-95 (TEPPTCK), 96-102 (TKPPTCR), 103-109 (TEPPTCR), 110-116 (TEPPTCK), 117-123 (TKPPTCK), 124-130 (TEPPTCK), 131-137 (TEPPTCR), 138-144 (TEPPTCK), 145-151 (TEPPTCR), 152-158 (TEPPTCK), 159-165 (TEPPTCK), and 166-172 (TEPPTCK). Residues 26–84 (TEPPRCETEPPRCETEPPRCETEPPRCETEPPRCETTTPKCETTPPTCRTEPPTCKTEP) are disordered. Positions 26-179 (TEPPRCETEP…TCKTEPPCEK (154 aa)) are 22 X 7 AA approximate tandem repeats of T-[ETK]-[PT]-P-[RKT]-C-[ERK]. Over residues 27-58 (EPPRCETEPPRCETEPPRCETEPPRCETEPPR) the composition is skewed to basic and acidic residues. Over residues 59–84 (CETTTPKCETTPPTCRTEPPTCKTEP) the composition is skewed to low complexity. Residues 141–174 (PTCKTEPPTCRTEPPTCKTEPPTCKTEPPTCKTE) show a composition bias toward low complexity. Disordered stretches follow at residues 141–218 (PTCK…SGCG) and 243–297 (PDSK…KGGC). A 22; approximate repeat occupies 173-179 (TEPPCEK). 2 stretches are compositionally biased toward basic residues: residues 181-208 (CTKRIKRHRTKRTKRSKSTKKIVHHHNR) and 282-291 (NTTKKPRKTQ).

In terms of tissue distribution, salivary gland.

The protein resides in the secreted. In Drosophila melanogaster (Fruit fly), this protein is Salivary glue protein Sgs-4 (Sgs4).